A 468-amino-acid chain; its full sequence is MSYVIAAPEMLATTAADVDGIGSAIRAASASAAGPTTGLLAAAADEVSSAAAALFSEYARECQEVLKQAAAFHGEFTRALAAAGAAYAQAEASNTAAMSGTAGSSGALGSVGMLSGNPLTALMMGGTGEPILSDRVLAIIDSAYIRPIFGPNNPVAQYTPEQWWPFIGNLSLDQSIAQGVTLLNNGINAELQNGHDVVVFGYSQSAAVATNEIRALMALPPGQAPDPSRLAFTLIGNINNPNGGVLERYVGLYLPFLDMSFNGATPPDSPYQTYMYTGQYDGYAHNPQYPLNILSDLNAFMGIRWVHNAYPFTAAEVANAVPLPTSPGYTGNTHYYMFLTQDLPLLQPIRAIPFVGTPIAELIQPDLRVLVDLGYGYGYADVPTPASLFAPINPIAVASALATGTVQGPQAALVSIGLLPQSALPNTYPYLPSANPGLMFNFGQSSVTELSVLSGALGSVARLIPPIA.

The PE domain maps to 1 to 92 (MSYVIAAPEM…AGAAYAQAEA (92 aa)). The 222-residue stretch at 154–375 (PVAQYTPEQW…DLRVLVDLGY (222 aa)) folds into the PE-PPE domain.

This sequence belongs to the mycobacterial PE family.

It is found in the secreted. The protein localises to the cell wall. Functionally, plays significant roles in mycobacterial persistence during infection and modulates host immune response. In Mycobacterium tuberculosis (strain ATCC 25618 / H37Rv), this protein is PE family protein PE3.